A 483-amino-acid polypeptide reads, in one-letter code: MGKTLAEKVWDAHVVRKGEGEGANAQPDLLFIDLHLIHEVTSPQAFEGLRLAGRPLRRVDLTIATEDHNTPTLDIDKPIADLTSRTQIETLRANCKEFGVRLHSLGDKEQGIVHVVGPQLGLTQPGMTVVCGDSHTSTHGAFGALAMGIGTSEVEHVMATQTLSLKPFKTMAINVEGTLRPGVTAKDIILAVIAKIGTGGGQGYVLEYRGSAIRALSMDARMTICNMSIEAGARAGMVAPDQTTYDYMQGRPHAPEGADWDAAVEYWNTLTTDADATFDVEVDLDADTLEPFVTWGTNPGQGVSLSAKVPSPEDFGDENAKAAAERALQYMGLEAGTPMKDIRVDTVFLGSCTNSRIEDLRVAADIIRGRAKDPNVRMLVVPGSARVRLEAEAEGLDKVFKEFGAEWRFAGCSMCLGMNPDQLEPGERCASTSNRNFEGRQGKGGRTHLVSPVVAAATAVRGTLSSPSDLEPAAAGALTGIAV.

[4Fe-4S] cluster contacts are provided by cysteine 352, cysteine 412, and cysteine 415.

The protein belongs to the aconitase/IPM isomerase family. LeuC type 1 subfamily. Heterodimer of LeuC and LeuD. [4Fe-4S] cluster serves as cofactor.

It carries out the reaction (2R,3S)-3-isopropylmalate = (2S)-2-isopropylmalate. Its pathway is amino-acid biosynthesis; L-leucine biosynthesis; L-leucine from 3-methyl-2-oxobutanoate: step 2/4. Catalyzes the isomerization between 2-isopropylmalate and 3-isopropylmalate, via the formation of 2-isopropylmaleate. In Paenarthrobacter aurescens (strain TC1), this protein is 3-isopropylmalate dehydratase large subunit.